Consider the following 1483-residue polypeptide: Cystic fibrosis transmembrane conductance regulator (1483 aa).

At 1 to 77 the chain is on the cytoplasmic side; it reads MQRSPLEKAS…KLINALRRCF (77 aa). A helical transmembrane segment spans residues 78 to 98; sequence FWRFAFYGILLYLGEVTKAVQ. Residues 81–365 form the ABC transmembrane type-1 1 domain; the sequence is FAFYGILLYL…WAVQTWYDSL (285 aa). Residues 99–122 lie on the Extracellular side of the membrane; that stretch reads PLLLGRIIASYDPDNKQERSIAIY. Residues 123–146 form a helical membrane-spanning segment; it reads LAIGLCLLFIMRPLLLHPAIFGLH. At 147–195 the chain is on the cytoplasmic side; sequence HIGMQIRIAMFSLIYKKTLKLSSRVLDKISIGQLVSLLSNNLNKFDEGL. Residues 196-216 traverse the membrane as a helical segment; that stretch reads ALAHFVWIAPLQVTLLMGLLW. At 217–222 the chain is on the extracellular side; the sequence is DLLQAS. A helical transmembrane segment spans residues 223 to 243; that stretch reads AFCGLAFLIVLALVQAGLGRM. Over 244 to 298 the chain is Cytoplasmic; the sequence is IMKYRDQRAGKINERLVITSEVIENIQSVKAYCWEEAMEKIIENIRQTELKLTRK. A helical transmembrane segment spans residues 299–319; that stretch reads AAHVRYFNSSAFFFSGFFVVS. Topologically, residues 320–339 are extracellular; it reads LSVLPYALIKTIILRKIFTT. Residues 340-358 form a helical membrane-spanning segment; that stretch reads ISFCIVLRMAVTRQFPWAV. Residues 359–859 are Cytoplasmic-facing; that stretch reads QTWYDSLGAI…YLRYITVHKN (501 aa). ATP is bound by residues tryptophan 401, serine 434, 458–465, and glutamine 493; that span reads GSTGAGKT. An ABC transporter 1 domain is found at 423–646; sequence NGDNSLFFSN…RPDFSSKLMG (224 aa). A lipid anchor (S-palmitoyl cysteine) is attached at cysteine 524. A phosphoserine mark is found at serine 549 and serine 660. The segment at 654-832 is disordered R region; the sequence is SPERRNSIIT…EEINEEDLKE (179 aa). The residue at position 670 (serine 670) is a Phosphoserine; by PKA. Position 686 is a phosphoserine (serine 686). Lysine 688 participates in a covalent cross-link: Glycyl lysine isopeptide (Lys-Gly) (interchain with G-Cter in ubiquitin). Serine 700 and serine 712 each carry phosphoserine. Residue threonine 717 is modified to Phosphothreonine. Phosphoserine occurs at positions 737, 768, 791, 796, and 814. A helical membrane pass occupies residues 860-880; that stretch reads LIFVLIWCLVIFLAEVAVSLV. The ABC transmembrane type-1 2 domain occupies 860–1156; it reads LIFVLIWCLV…AVNSSIEVDS (297 aa). The Extracellular portion of the chain corresponds to 881–919; it reads VLWILRNLSSQDKGNSTQSVNSSYAVIFTSTSAYYIFYI. Residues asparagine 887, asparagine 895, and asparagine 901 are each glycosylated (N-linked (GlcNAc...) asparagine). The discontinuously helical transmembrane segment at 920 to 940 threads the bilayer; the sequence is YVGVADTLLALGLFRGLPLVH. Over 941-991 the chain is Cytoplasmic; sequence TLITVSKILHHKMLHSVLQAPMSTLNTLKAGGILNRFSKDIAILDDLLPLT. Residues 992 to 1012 form a helical membrane-spanning segment; sequence IFDFIQLLLIVIGAVAVVSVL. The Extracellular portion of the chain corresponds to 1013-1014; sequence QP. Residues 1015–1035 traverse the membrane as a helical segment; that stretch reads YIFLATVPVIAAFIILRAYFL. At 1036–1096 the chain is on the cytoplasmic side; that stretch reads HTSQQLKQLE…TANWFLYLST (61 aa). Residues 1097-1117 form a helical membrane-spanning segment; it reads LRWFQMRMEIIFVIFFIAVTF. The Extracellular segment spans residues 1118–1131; it reads ISILTTGEGEGTVG. Residues 1132–1152 form a helical membrane-spanning segment; the sequence is IILTLAMNIMGTLQWAVNSSI. At 1153–1483 the chain is on the cytoplasmic side; the sequence is EVDSLMRSVS…TEDEVQDTRL (331 aa). Residues 1213 to 1446 form the ABC transporter 2 domain; that stretch reads MTVKDLTAKY…RSAFRQAIGP (234 aa). ATP-binding positions include tyrosine 1222 and 1247 to 1254; that span reads GRTGSGKS. Positions 1389–1483 are interaction with GORASP2; that stretch reads RTLKQAFADC…TEDEVQDTRL (95 aa). Cysteine 1398 is lipidated: S-palmitoyl cysteine. The disordered stretch occupies residues 1444–1483; it reads IGPPERPGLLPHRLSSRQRSPSRIAALKEETEDEVQDTRL. The residue at position 1459 (serine 1459) is a Phosphoserine. The span at 1473 to 1483 shows a compositional bias: acidic residues; the sequence is ETEDEVQDTRL. Residues 1481–1483 carry the PDZ-binding motif; sequence TRL.

The protein belongs to the ABC transporter superfamily. ABCC family. CFTR transporter (TC 3.A.1.202) subfamily. As to quaternary structure, monomer; does not require oligomerization for channel activity. May form oligomers in the membrane. Interacts with SLC26A3, SLC26A6 and NHERF1. Interacts with SHANK2. Interacts with MYO6. Interacts (via C-terminus) with GOPC (via PDZ domain); this promotes CFTR internalization and thereby decreases channel activity. Interacts with SLC4A7 through NHERF1. Found in a complex with MYO5B and RAB11A. Interacts with ANO1. Interacts with SLC26A8. Interacts with AHCYL1; the interaction increases CFTR activity. Interacts with CSE1L. The core-glycosylated form interacts with GORASP2 (via PDZ GRASP-type 1 domain) in respone to ER stress. Interacts with MARCHF2; the interaction leads to CFTR ubiqtuitination and degradation. Interacts with ADGRG2. Post-translationally, N-glycosylated. In terms of processing, phosphorylated; cAMP treatment promotes phosphorylation and activates the channel. Dephosphorylation decreases the ATPase activity (in vitro). Phosphorylation at PKA sites activates the channel. Phosphorylation at PKC sites enhances the response to phosphorylation by PKA. Phosphorylated by AMPK; this inhibits channel activity. Ubiquitinated, leading to its degradation in the lysosome. Deubiquitination by USP10 in early endosomes enhances its endocytic recycling to the cell membrane. Ubiquitinated by RNF185 during ER stress. Ubiquitinated by MARCHF2.

It is found in the apical cell membrane. It localises to the early endosome membrane. The protein localises to the cell membrane. Its subcellular location is the recycling endosome membrane. The protein resides in the endoplasmic reticulum membrane. It is found in the nucleus. The catalysed reaction is ATP + H2O + closed Cl(-) channel = ADP + phosphate + open Cl(-) channel.. The enzyme catalyses chloride(in) = chloride(out). It catalyses the reaction hydrogencarbonate(in) = hydrogencarbonate(out). It carries out the reaction ATP + H2O = ADP + phosphate + H(+). Epithelial ion channel that plays an important role in the regulation of epithelial ion and water transport and fluid homeostasis. Mediates the transport of chloride ions across the cell membrane. Possesses an intrinsic ATPase activity and utilizes ATP to gate its channel; the passive flow of anions through the channel is gated by cycles of ATP binding and hydrolysis by the ATP-binding domains. The ion channel is also permeable to HCO(3)(-); selectivity depends on the extracellular chloride concentration. Exerts its function also by modulating the activity of other ion channels and transporters. Contributes to the regulation of the pH and the ion content of the epithelial fluid layer. Modulates the activity of the epithelial sodium channel (ENaC) complex, in part by regulating the cell surface expression of the ENaC complex. May regulate bicarbonate secretion and salvage in epithelial cells by regulating the transporter SLC4A7. Can inhibit the chloride channel activity of ANO1. Plays a role in the chloride and bicarbonate homeostasis during sperm epididymal maturation and capacitation. This Canis lupus familiaris (Dog) protein is Cystic fibrosis transmembrane conductance regulator.